The following is a 449-amino-acid chain: Acetolactate synthase small subunit 1, chloroplastic (449 aa).

A chloroplast-targeting transit peptide spans 1–30; that stretch reads MEHIQTRTTLSQLSTLPSDKRLGAIRFKCL. ACT domains are found at residues 31 to 98 and 259 to 333; these read LVMK…DLSK and TLSM…DITH.

Belongs to the acetolactate synthase small subunit family. In terms of assembly, the acetolactate synthase complex contains both large catalytic subunits and small regulatory subunits.

It is found in the plastid. It localises to the chloroplast. It participates in amino-acid biosynthesis; L-isoleucine biosynthesis; L-isoleucine from 2-oxobutanoate: step 1/4. It functions in the pathway amino-acid biosynthesis; L-valine biosynthesis; L-valine from pyruvate: step 1/4. Regulatory subunit of acetohydroxy-acid synthase. Probably involved in feedback inhibition by branched-chain amino acids. Not involved in herbicide tolerance. The protein is Acetolactate synthase small subunit 1, chloroplastic of Nicotiana plumbaginifolia (Leadwort-leaved tobacco).